The chain runs to 215 residues: Small ribosomal subunit protein uS3 (215 aa).

Positions 39–107 constitute a KH type-2 domain; that stretch reads VRQYLQKKLA…PVHINIEEIR (69 aa).

The protein belongs to the universal ribosomal protein uS3 family. Part of the 30S ribosomal subunit. Forms a tight complex with proteins S10 and S14.

Its function is as follows. Binds the lower part of the 30S subunit head. Binds mRNA in the 70S ribosome, positioning it for translation. The polypeptide is Small ribosomal subunit protein uS3 (Nitrosomonas europaea (strain ATCC 19718 / CIP 103999 / KCTC 2705 / NBRC 14298)).